A 693-amino-acid chain; its full sequence is Golgin subfamily A member 6B (693 aa).

Residues 1-11 (MWPQPYLPPHP) show a composition bias toward pro residues. Disordered stretches follow at residues 1–72 (MWPQ…SQYQ), 497–551 (LPGE…VERR), 629–650 (NPAD…AGEQ), and 660–679 (NNVE…DNPT). The stretch at 77 to 611 (ALESSSVTIS…KLLELQELVL (535 aa)) forms a coiled coil. A compositionally biased stretch (basic and acidic residues) spans 537–551 (LPKEKADGTEQVERR).

It belongs to the GOLGA6 family.

The sequence is that of Golgin subfamily A member 6B (GOLGA6B) from Homo sapiens (Human).